Reading from the N-terminus, the 72-residue chain is Translation initiation factor IF-1 2 (72 aa).

The 72-residue stretch at 1 to 72 folds into the S1-like domain; that stretch reads MAKDDVIQMQ…SRARIVFRTK (72 aa).

It belongs to the IF-1 family. As to quaternary structure, component of the 30S ribosomal translation pre-initiation complex which assembles on the 30S ribosome in the order IF-2 and IF-3, IF-1 and N-formylmethionyl-tRNA(fMet); mRNA recruitment can occur at any time during PIC assembly.

The protein resides in the cytoplasm. One of the essential components for the initiation of protein synthesis. Stabilizes the binding of IF-2 and IF-3 on the 30S subunit to which N-formylmethionyl-tRNA(fMet) subsequently binds. Helps modulate mRNA selection, yielding the 30S pre-initiation complex (PIC). Upon addition of the 50S ribosomal subunit IF-1, IF-2 and IF-3 are released leaving the mature 70S translation initiation complex. This is Translation initiation factor IF-1 2 from Cupriavidus metallidurans (strain ATCC 43123 / DSM 2839 / NBRC 102507 / CH34) (Ralstonia metallidurans).